The chain runs to 300 residues: Ribonuclease HIII (300 aa).

One can recognise an RNase H type-2 domain in the interval 83 to 300 (IPIIGSDEVG…THKAQALLTK (218 aa)). Residues Asp-89, Glu-90, and Asp-194 each contribute to the a divalent metal cation site.

The protein belongs to the RNase HII family. RnhC subfamily. Mn(2+) is required as a cofactor. Requires Mg(2+) as cofactor.

It localises to the cytoplasm. The catalysed reaction is Endonucleolytic cleavage to 5'-phosphomonoester.. Its function is as follows. Endonuclease that specifically degrades the RNA of RNA-DNA hybrids. In Streptococcus pyogenes serotype M28 (strain MGAS6180), this protein is Ribonuclease HIII.